The chain runs to 451 residues: UDP-N-acetylmuramoylalanine--D-glutamate ligase (451 aa).

118–124 (GTKGKST) contributes to the ATP binding site.

The protein belongs to the MurCDEF family.

It is found in the cytoplasm. It carries out the reaction UDP-N-acetyl-alpha-D-muramoyl-L-alanine + D-glutamate + ATP = UDP-N-acetyl-alpha-D-muramoyl-L-alanyl-D-glutamate + ADP + phosphate + H(+). It functions in the pathway cell wall biogenesis; peptidoglycan biosynthesis. Its function is as follows. Cell wall formation. Catalyzes the addition of glutamate to the nucleotide precursor UDP-N-acetylmuramoyl-L-alanine (UMA). This chain is UDP-N-acetylmuramoylalanine--D-glutamate ligase, found in Borreliella afzelii (strain PKo) (Borrelia afzelii).